The primary structure comprises 192 residues: Orotate phosphoribosyltransferase (192 aa).

5-phospho-alpha-D-ribose 1-diphosphate is bound at residue 116 to 124; that stretch reads EDIVTTGLS. 2 residues coordinate orotate: Thr120 and Arg148.

The protein belongs to the purine/pyrimidine phosphoribosyltransferase family. PyrE subfamily. In terms of assembly, homodimer. Mg(2+) serves as cofactor.

The catalysed reaction is orotidine 5'-phosphate + diphosphate = orotate + 5-phospho-alpha-D-ribose 1-diphosphate. Its pathway is pyrimidine metabolism; UMP biosynthesis via de novo pathway; UMP from orotate: step 1/2. Catalyzes the transfer of a ribosyl phosphate group from 5-phosphoribose 1-diphosphate to orotate, leading to the formation of orotidine monophosphate (OMP). The sequence is that of Orotate phosphoribosyltransferase from Brucella abortus (strain S19).